A 539-amino-acid chain; its full sequence is Acid-sensing ion channel 4 (539 aa).

Residues 1–68 are Cytoplasmic-facing; sequence MPIEIVCKIK…GPGPHGLRRT (68 aa). Residues 69-89 traverse the membrane as a helical segment; it reads LWALALLTSLAAFLYQAAGLA. Residues 90 to 438 lie on the Extracellular side of the membrane; sequence RGYLTRPHLV…EQRAAYGLSA (349 aa). Disulfide bonds link Cys-118–Cys-202 and Cys-180–Cys-187. 2 N-linked (GlcNAc...) asparagine glycosylation sites follow: Asn-191 and Asn-243. Intrachain disulfides connect Cys-296/Cys-375, Cys-318/Cys-371, Cys-322/Cys-369, Cys-331/Cys-353, and Cys-333/Cys-345. The N-linked (GlcNAc...) asparagine glycan is linked to Asn-376. A helical membrane pass occupies residues 439–459; sequence LLGDLGGQMGLFIGASILTLL. The short motif at 452 to 454 is the GAS motif; ion selectivity filter element; that stretch reads GAS. Residues 460–539 are Cytoplasmic-facing; sequence EILDYIYEVS…PGGLFEDFAC (80 aa). Residues 501-531 form a disordered region; the sequence is EQSPCPSRGRVEGGGVSSLLPNHHHPHGPPG.

It belongs to the amiloride-sensitive sodium channel (TC 1.A.6) family. ASIC4 subfamily. Homotrimer. Heterotrimer; with other ASIC proteins producing functional channels. As to expression, expressed in pituitary gland. Weakly expressed in brain, vestibular system and organ of Corti.

Its subcellular location is the cell membrane. In terms of biological role, does not exhibit measurable stand-alone pH-gated sodium channel activity but may form pH-gated heterotrimeric sodium channels. Its activity could also depend on alternative gating mechanisms. The polypeptide is Acid-sensing ion channel 4 (Homo sapiens (Human)).